Reading from the N-terminus, the 270-residue chain is Chlorophyll a-b binding protein, chloroplastic (270 aa).

Residues 1–41 (MASACASSTIAAVAFSSPSSQKNGSIVGATKASFLGGKRLR) constitute a chloroplast transit peptide. Residue W68 participates in chlorophyll b binding. 3 residues coordinate chlorophyll a: F88, E107, and H110. A chlorophyll b-binding site is contributed by R112. Residues 113–133 (WAMLGAAGIFIPEFLTKIGVL) traverse the membrane as a helical segment. Position 144 (Q144) interacts with chlorophyll a. The helical transmembrane segment at 146–166 (YFTDTTTLFVIELVLIGWAEG) threads the bilayer. Chlorophyll b is bound by residues V155, E165, and R168. Residues K221, E222, N225, R227, Q239, and H254 each coordinate chlorophyll a. The chain crosses the membrane as a helical span at residues 228 to 248 (LAMLAVMGAWFQHIYTGTGPI).

This sequence belongs to the light-harvesting chlorophyll a/b-binding (LHC) protein family. In terms of assembly, the LHC complex consists of chlorophyll a-b binding proteins. It depends on Binds at least 14 chlorophylls (8 Chl-a and 6 Chl-b) and carotenoids such as lutein and neoxanthin. as a cofactor. In terms of processing, photoregulated by reversible phosphorylation of its threonine residues.

It localises to the plastid. It is found in the chloroplast thylakoid membrane. Functionally, the light-harvesting complex (LHC) functions as a light receptor, it captures and delivers excitation energy to photosystems with which it is closely associated. The protein is Chlorophyll a-b binding protein, chloroplastic of Petunia hybrida (Petunia).